Here is a 324-residue protein sequence, read N- to C-terminus: Bacilliredoxin reductase Bdr (324 aa).

Cysteine 220 is modified (S-bacillithiol cysteine disulfide).

Interacts with BrxC. Requires FAD as cofactor. C-terminal Cys can react with bacillithiol (BSH) to form mixed disulfides. S-bacillithiolation protects Cys residues against overoxidation by acting as a redox switch in response to oxidative stress.

S-bacillithiolation is the formation of mixed disulfide bonds between protein thiols and the general thiol reductant bacillithiol (BSH) under oxidative stress. BSH is an equivalent of glutathione (GSH) in Firmicutes. This protein is a NADPH-dependent bacilliredoxin reductase, which debacillithiolates (removes BSH) the S-bacillithiolated BrxB (BrxB-SSB), and to a lesser extent BrxC (BrxC-SSB). Involved in a redox cascade increasing the efficacy of BrxB function by reducing BrxB-SSB and thus reactivating it. Has NADPH-dependent oxidase activity under aerobic conditions producing hydrogen peroxide (H(2)O(2)). The polypeptide is Bacilliredoxin reductase Bdr (Bacillus subtilis (strain 168)).